The primary structure comprises 1157 residues: Zinc finger protein 516 (1157 aa).

Residues methionine 1–arginine 13 are compositionally biased toward basic and acidic residues. The segment at methionine 1–valine 26 is disordered. The interval methionine 1–alanine 420 is mediates promoter DNA-binding and activation of transcription. C2H2-type zinc fingers lie at residues histidine 34–histidine 56, tyrosine 62–histidine 84, valine 162–histidine 185, phenylalanine 188–histidine 211, phenylalanine 236–histidine 258, histidine 264–histidine 286, and glutamate 323–histidine 345. The span at serine 449–aspartate 458 shows a compositional bias: basic and acidic residues. Disordered regions lie at residues serine 449 to serine 503 and serine 523 to glutamate 653. The segment covering alanine 494 to serine 503 has biased composition (polar residues). The segment at serine 504–histidine 526 adopts a C2H2-type 8 zinc-finger fold. The segment covering arginine 531 to alanine 541 has biased composition (basic and acidic residues). Over residues glutamate 550–glycine 561 the composition is skewed to polar residues. Residues glutamate 575–valine 585 are compositionally biased toward acidic residues. The segment covering glycine 601 to aspartate 612 has biased composition (polar residues). A Glycyl lysine isopeptide (Lys-Gly) (interchain with G-Cter in SUMO2) cross-link involves residue lysine 630. The span at serine 644 to glutamate 653 shows a compositional bias: basic and acidic residues. Lysine 669 participates in a covalent cross-link: Glycyl lysine isopeptide (Lys-Gly) (interchain with G-Cter in SUMO2). The C2H2-type 9; atypical zinc finger occupies histidine 753–histidine 776. Disordered stretches follow at residues threonine 831–valine 996 and arginine 1013–glutamine 1040. Residues glycine 914–valine 928 show a composition bias toward polar residues. Glycyl lysine isopeptide (Lys-Gly) (interchain with G-Cter in SUMO2) cross-links involve residues lysine 1032 and lysine 1051. The C2H2-type 10 zinc-finger motif lies at phenylalanine 1092–histidine 1114. The interval proline 1123 to isoleucine 1157 is disordered.

This sequence belongs to the krueppel C2H2-type zinc-finger protein family. Interacts with PRDM16; the interaction is direct and may play a role in the transcription of brown adipose tissue-specific genes. Interacts with PWWP2B. Interacts with HDAC1; this interaction is enhanced in the presence of PWWP2B. Expressed by adipocytes more specifically in brown adipose tissue compared to white adipose tissue (WAT).

It is found in the nucleus. Transcriptional regulator that binds to the promoter and activates the transcription of genes promoting brown adipose tissue (BAT) differentiation. Among brown adipose tissue-specific genes, binds the proximal region of the promoter of the UCP1 gene to activate its transcription and thereby regulate thermogenesis. May also play a role in the cellular response to replication stress. This Mus musculus (Mouse) protein is Zinc finger protein 516.